Here is a 142-residue protein sequence, read N- to C-terminus: Putative pre-16S rRNA nuclease (142 aa).

This sequence belongs to the YqgF nuclease family.

It localises to the cytoplasm. Functionally, could be a nuclease involved in processing of the 5'-end of pre-16S rRNA. The protein is Putative pre-16S rRNA nuclease of Saccharophagus degradans (strain 2-40 / ATCC 43961 / DSM 17024).